Here is a 249-residue protein sequence, read N- to C-terminus: MRILIANDDGVTAPGIAALYDALADHADCVVIAPDQDKSGASSSLTLERPLHPQRLDNGFISLNGTPTDCVHLGLNGLLEELPDMVVSGINLGANLGDDVLYSGTVAAAIEGRFLKGPAFAFSLVSRLTDNLPTAMHFARLLVSAHERLAVPPRTVLNVNIPNLPLDRVRGIQLTRLGHRARAAAPVKVVNPRGKEGYWIAAAGDAEDGGPGTDFHAVMQGYVSITPLQLDRTFHEAFGGLDEWLGGLT.

4 residues coordinate a divalent metal cation: aspartate 8, aspartate 9, serine 39, and asparagine 91.

It belongs to the SurE nucleotidase family. A divalent metal cation serves as cofactor.

It is found in the cytoplasm. It catalyses the reaction a ribonucleoside 5'-phosphate + H2O = a ribonucleoside + phosphate. Its function is as follows. Nucleotidase that shows phosphatase activity on nucleoside 5'-monophosphates. The polypeptide is 5'-nucleotidase SurE (Pseudomonas aeruginosa (strain LESB58)).